Reading from the N-terminus, the 179-residue chain is Sodium/potassium-transporting ATPase subunit beta-1-interacting protein 3 (179 aa).

4 consecutive transmembrane segments (helical) span residues 5-22 (TGRC…LVAL), 35-55 (APIL…FGTI), 62-82 (IVAY…IICF), and 151-171 (AVQI…ISVI).

The protein belongs to the NKAIN family. In terms of assembly, interacts with atp1b1 C-terminus.

The protein resides in the cell membrane. The polypeptide is Sodium/potassium-transporting ATPase subunit beta-1-interacting protein 3 (nkain3) (Xenopus laevis (African clawed frog)).